Reading from the N-terminus, the 207-residue chain is Putative 3-methyladenine DNA glycosylase (207 aa).

The protein belongs to the DNA glycosylase MPG family.

The chain is Putative 3-methyladenine DNA glycosylase from Koribacter versatilis (strain Ellin345).